Consider the following 431-residue polypeptide: Enolase (431 aa).

Gln-166 lines the (2R)-2-phosphoglycerate pocket. Glu-208 (proton donor) is an active-site residue. 3 residues coordinate Mg(2+): Asp-245, Glu-288, and Asp-315. Positions 340, 369, 370, and 391 each coordinate (2R)-2-phosphoglycerate. Lys-340 acts as the Proton acceptor in catalysis.

It belongs to the enolase family. Mg(2+) serves as cofactor.

Its subcellular location is the cytoplasm. The protein resides in the secreted. It is found in the cell surface. It carries out the reaction (2R)-2-phosphoglycerate = phosphoenolpyruvate + H2O. Its pathway is carbohydrate degradation; glycolysis; pyruvate from D-glyceraldehyde 3-phosphate: step 4/5. In terms of biological role, catalyzes the reversible conversion of 2-phosphoglycerate (2-PG) into phosphoenolpyruvate (PEP). It is essential for the degradation of carbohydrates via glycolysis. The protein is Enolase of Clostridium botulinum (strain Kyoto / Type A2).